Consider the following 409-residue polypeptide: DNA primase DnaG (409 aa).

The Toprim domain maps to 175–261 (DAIIVVEGRA…EVEELTRKEI (87 aa)). 3 residues coordinate Mg(2+): E181, D223, and D225. A compositionally biased stretch (basic and acidic residues) spans 280 to 289 (ERPKDKEREK). The tract at residues 280–322 (ERPKDKEREKGKKPKPKKRPERRGRPRKKKARPKRGPQERRLL) is disordered. Basic residues predominate over residues 290-314 (GKKPKPKKRPERRGRPRKKKARPKR).

This sequence belongs to the archaeal DnaG primase family. Forms a ternary complex with MCM helicase and DNA. Component of the archaeal exosome complex. The cofactor is Mg(2+).

The catalysed reaction is ssDNA + n NTP = ssDNA/pppN(pN)n-1 hybrid + (n-1) diphosphate.. Its function is as follows. RNA polymerase that catalyzes the synthesis of short RNA molecules used as primers for DNA polymerase during DNA replication. Also part of the exosome, which is a complex involved in RNA degradation. Acts as a poly(A)-binding protein that enhances the interaction between heteromeric, adenine-rich transcripts and the exosome. The polypeptide is DNA primase DnaG (Methanopyrus kandleri (strain AV19 / DSM 6324 / JCM 9639 / NBRC 100938)).